The chain runs to 180 residues: MASSVISSAAVATRTNVAQASMVAPFNGLKSAVSFPVSSKQNLDITSIASNGGRVQCMQVWPPYGKKKYETLSYLPDLTDEQLLKEIEYLLNKGWVPCLEFETEHGFVYREYHASPRYYDGRYWTMWKLPMFGCTDATQVLGELQEAKKAYPNAWIRIIGFDNVRQVQCISFIAYKPPGF.

A chloroplast-targeting transit peptide spans 1-56; sequence MASSVISSAAVATRTNVAQASMVAPFNGLKSAVSFPVSSKQNLDITSIASNGGRVQ.

The protein belongs to the RuBisCO small chain family. Heterohexadecamer of 8 large and 8 small subunits.

It is found in the plastid. The protein resides in the chloroplast. RuBisCO catalyzes two reactions: the carboxylation of D-ribulose 1,5-bisphosphate, the primary event in carbon dioxide fixation, as well as the oxidative fragmentation of the pentose substrate. Both reactions occur simultaneously and in competition at the same active site. Although the small subunit is not catalytic it is essential for maximal activity. The chain is Ribulose bisphosphate carboxylase small subunit, chloroplastic 1 from Petunia hybrida (Petunia).